We begin with the raw amino-acid sequence, 488 residues long: Germacrene A hydroxylase (488 aa).

The Cytoplasmic portion of the chain corresponds to 1-6 (MELSFT). The helical; Signal-anchor for type II membrane protein transmembrane segment at 7 to 23 (TSIAVATIVFVLFKLAT) threads the bilayer. Residues 24–488 (RPKSNKKLLP…KTHLVLVPSF (465 aa)) are Lumenal-facing. N255, N260, and N379 each carry an N-linked (GlcNAc...) asparagine glycan. Position 432 (C432) interacts with heme.

The protein belongs to the cytochrome P450 family. It depends on heme as a cofactor.

It localises to the endoplasmic reticulum membrane. The enzyme catalyses (+)-(R)-germacrene A + 3 reduced [NADPH--hemoprotein reductase] + 3 O2 = germacra-1(10),4,11(13)-trien-12-oate + 3 oxidized [NADPH--hemoprotein reductase] + 4 H2O + 4 H(+). The protein operates within secondary metabolite biosynthesis; terpenoid biosynthesis. Functionally, involved in the biosynthesis of germacrene-derived sesquiterpene lactones. Catalyzes three consecutive oxidations of germacrene A to produce germacrene A acid. Could also catalyze the three-step oxidation of non-natural substrate amorphadiene to artemisinic acid. The polypeptide is Germacrene A hydroxylase (Saussurea costus (Costus)).